A 380-amino-acid polypeptide reads, in one-letter code: Probable tRNA sulfurtransferase (380 aa).

One can recognise a THUMP domain in the interval 58 to 162 (EEVIERLKKV…MAFVYAGVIE (105 aa)). ATP-binding positions include 178-179 (LL), 203-204 (YF), R260, G282, and Q291.

Belongs to the ThiI family.

It is found in the cytoplasm. It catalyses the reaction [ThiI sulfur-carrier protein]-S-sulfanyl-L-cysteine + a uridine in tRNA + 2 reduced [2Fe-2S]-[ferredoxin] + ATP + H(+) = [ThiI sulfur-carrier protein]-L-cysteine + a 4-thiouridine in tRNA + 2 oxidized [2Fe-2S]-[ferredoxin] + AMP + diphosphate. It carries out the reaction [ThiS sulfur-carrier protein]-C-terminal Gly-Gly-AMP + S-sulfanyl-L-cysteinyl-[cysteine desulfurase] + AH2 = [ThiS sulfur-carrier protein]-C-terminal-Gly-aminoethanethioate + L-cysteinyl-[cysteine desulfurase] + A + AMP + 2 H(+). It functions in the pathway cofactor biosynthesis; thiamine diphosphate biosynthesis. Functionally, catalyzes the ATP-dependent transfer of a sulfur to tRNA to produce 4-thiouridine in position 8 of tRNAs, which functions as a near-UV photosensor. Also catalyzes the transfer of sulfur to the sulfur carrier protein ThiS, forming ThiS-thiocarboxylate. This is a step in the synthesis of thiazole, in the thiamine biosynthesis pathway. The sulfur is donated as persulfide by IscS. The sequence is that of Probable tRNA sulfurtransferase from Thermoanaerobacter pseudethanolicus (strain ATCC 33223 / 39E) (Clostridium thermohydrosulfuricum).